Here is a 325-residue protein sequence, read N- to C-terminus: Sulfite dehydrogenase subunit C (325 aa).

Transmembrane regions (helical) follow at residues 5 to 25 (FSVI…LAMV), 43 to 63 (FYAV…GASF), 87 to 107 (EVIV…AHWF), 126 to 146 (LLLG…TAMI), 165 to 185 (FLFL…AYIG), 186 to 206 (NPLV…GLAS), 266 to 286 (VYLV…YLIG), and 290 to 310 (LPII…WSFF).

This sequence belongs to the DmsC family. In terms of assembly, forms a heterotrimeric membrane-bound complex composed of a catalytic heterodimer (SoeAB) and a membrane anchor protein (SoeC).

It localises to the cell inner membrane. Part of the SoeABC complex that catalyzes the oxidation of sulfite to sulfate. SoeC probably anchors and stabilizes the catalytic subunits. The polypeptide is Sulfite dehydrogenase subunit C (Allochromatium vinosum (strain ATCC 17899 / DSM 180 / NBRC 103801 / NCIMB 10441 / D) (Chromatium vinosum)).